A 99-amino-acid polypeptide reads, in one-letter code: Integration host factor subunit alpha (99 aa).

The protein belongs to the bacterial histone-like protein family. Heterodimer of an alpha and a beta chain.

In terms of biological role, this protein is one of the two subunits of integration host factor, a specific DNA-binding protein that functions in genetic recombination as well as in transcriptional and translational control. This is Integration host factor subunit alpha (ihfA) from Xylella fastidiosa (strain 9a5c).